A 397-amino-acid polypeptide reads, in one-letter code: Elongation factor Tu (397 aa).

The tr-type G domain maps to Lys-10 to Glu-206. Residues Gly-19 to Thr-26 form a G1 region. Gly-19–Thr-26 provides a ligand contact to GTP. A Mg(2+)-binding site is contributed by Thr-26. Residues Gly-60–Asn-64 are G2. A G3 region spans residues Asp-81–Gly-84. Residues Asp-81 to His-85 and Asn-136 to Asp-139 contribute to the GTP site. The tract at residues Asn-136 to Asp-139 is G4. The G5 stretch occupies residues Ser-174 to Leu-176.

Belongs to the TRAFAC class translation factor GTPase superfamily. Classic translation factor GTPase family. EF-Tu/EF-1A subfamily. Monomer.

The protein resides in the cytoplasm. It carries out the reaction GTP + H2O = GDP + phosphate + H(+). GTP hydrolase that promotes the GTP-dependent binding of aminoacyl-tRNA to the A-site of ribosomes during protein biosynthesis. This chain is Elongation factor Tu, found in Clostridium kluyveri (strain ATCC 8527 / DSM 555 / NBRC 12016 / NCIMB 10680 / K1).